A 1507-amino-acid chain; its full sequence is Histone-lysine N-methyltransferase set-2 (1507 aa).

Residues 1-32 form a disordered region; the sequence is MSTHDMNHHPPRKSHSKRDKPSSSNSGPKIEN. The segment covering 9–18 has biased composition (basic residues); the sequence is HPPRKSHSKR. The RRM domain occupies 128 to 199; it reads VSLFNMDDNC…QNLLATKCTP (72 aa). Disordered regions lie at residues 280 to 578, 650 to 697, 803 to 826, 842 to 1058, and 1163 to 1199; these read DYTM…QPQM, EPFS…EEPA, DEEK…SNHL, SSRG…GPII, and QKPR…FKPR. Positions 296 to 315 are enriched in pro residues; that stretch reads PIPPPPIKEESPPPPPPPPV. The segment covering 316-327 has biased composition (low complexity); it reads ASVSNLAPVPSV. Polar residues predominate over residues 331-342; that stretch reads YYNNIQPSSSTM. The span at 413-444 shows a compositional bias: basic and acidic residues; the sequence is VKYETYKMEKRKIKYEGGNKKYEQVHIKERTA. Low complexity predominate over residues 456–465; sequence SSESASGSSS. Over residues 478-488 the composition is skewed to basic residues; that stretch reads KKKKRPKSPNR. The segment covering 566-575 has biased composition (polar residues); it reads HLQTPYQHVQ. Basic and acidic residues-rich tracts occupy residues 668–680 and 803–823; these read DVGR…KPSL and DEEK…EKPS. The span at 846–868 shows a compositional bias: basic residues; that stretch reads FYRKQKPIPKSHPKHQEHHHHAK. Residues 869 to 908 are compositionally biased toward low complexity; that stretch reads ASVSTPVHSSSTSRNSSVAPTPQRTVSTSSSSSSAATSAR. Over residues 941–951 the composition is skewed to polar residues; sequence SFSSTSIQSSP. Residues 958–971 are compositionally biased toward low complexity; that stretch reads SSSSRTSSSSSTSS. Residues 973 to 982 show a composition bias toward basic and acidic residues; the sequence is KQEETADEKS. The span at 990–1007 shows a compositional bias: low complexity; the sequence is SSDESSTTGSTATSVVSS. Residues 1015–1047 are compositionally biased toward basic and acidic residues; sequence QQEKTDGEPPKKKSQTDFISERVSKIEGEERPL. Residues 1179–1190 show a composition bias toward pro residues; it reads EPPPTKRPAPPP. Positions 1340-1345 match the RxxxRR motif motif; that stretch reads RLLQRR. The SET domain maps to 1368–1485; it reads KMIKFARSRI…KGEEITYDYK (118 aa). Tyr-1484 contributes to the S-adenosyl-L-methionine binding site. The region spanning 1491–1507 is the Post-SET domain; that stretch reads DKIDCLCGAKTCRGYLN.

It belongs to the class V-like SAM-binding methyltransferase superfamily. In terms of assembly, component of the Set1C/COMPASS complex (also known as the SET2 complex), which contains at least set-2, swd-2.1, cfp-1, rbbp-5, wdr-5.1, dpy-30 and ash-2. Expressed in all cells of embryo. In L1 larva, it is predominantly expressed in Z2 and Z3 primordial germ cells. In adults, it is predominantly expressed in the germline.

It is found in the nucleus. It catalyses the reaction L-lysyl(4)-[histone H3] + 3 S-adenosyl-L-methionine = N(6),N(6),N(6)-trimethyl-L-lysyl(4)-[histone H3] + 3 S-adenosyl-L-homocysteine + 3 H(+). The enzyme catalyses N(6)-methyl-L-lysyl(4)-[histone H3] + S-adenosyl-L-methionine = N(6),N(6)-dimethyl-L-lysyl(4)-[histone H3] + S-adenosyl-L-homocysteine + H(+). The catalysed reaction is N(6),N(6)-dimethyl-L-lysyl(4)-[histone H3] + S-adenosyl-L-methionine = N(6),N(6),N(6)-trimethyl-L-lysyl(4)-[histone H3] + S-adenosyl-L-homocysteine + H(+). Its function is as follows. Catalytic component of the COMPASS (Set1C) complex that specifically mono-, di- and trimethylates histone H3 to form H3K4me1/2/3. Binds RNAs which might negatively affect its histone methyltransferase activity. COMPASS recognizes ubiquitinated H2B on one face of the nucleosome which stimulates the methylation of H3 on the opposing face. H3 'Lys-4' methylation represents a specific tag for epigenetic transcriptional activation. Implicated in the epigenetic inheritance of lifespan over several generations. Acts in the germline to limit the longevity of the soma, probably by regulating a lipid metabolism pathway that signals from the germline to the intestine, thereby preventing accumulation of mono-unsaturated fatty acids. Methylation in the germline is required for germline development and fertility, possibly by ensuring genome stability. May act redundantly with mes-3 and mes-4 proteins in the development of a fertile germline. Required for RNAi. Functions as an antagonist of hpl-1 and hpl-2 activity in growth and somatic gonad development. Cooperates with jmjd-3.1 and egl-27 to ensure robust transdifferentiation of the Y rectal cell to the PDA motor neuron during larval development. This is Histone-lysine N-methyltransferase set-2 (set-2) from Caenorhabditis elegans.